The sequence spans 697 residues: uncharacterized protein (697 aa).

The next 14 helical transmembrane spans lie at 65 to 85 (PVRN…VGIY), 106 to 126 (CTFR…LHNF), 131 to 151 (YRQS…EKAI), 163 to 183 (DAAL…DINE), 194 to 214 (LSSY…VPLG), 227 to 247 (TSAT…TASI), 286 to 306 (STNA…ANKD), 316 to 336 (PVTD…VLLE), 361 to 381 (SDEI…PEGV), 394 to 414 (MFEL…MAWE), 419 to 439 (ERML…EPYH), 450 to 470 (SVKR…YLAI), 487 to 507 (QGSQ…YKVW), and 558 to 578 (TSAG…HHRQ). The interval 246-321 (SINVRTSATT…NRFHPVTDIN (76 aa)) is disordered. Low complexity predominate over residues 251-298 (TSATTTESTNSNTNATTTESTNSSTNATTTASTNSSTNATTTESTNAS). Positions 299-321 (AKEDANKDGNAEDNRFHPVTDIN) are enriched in basic and acidic residues.

The protein localises to the membrane. This is an uncharacterized protein from Saccharomyces cerevisiae (strain ATCC 204508 / S288c) (Baker's yeast).